The following is a 132-amino-acid chain: Small ribosomal subunit protein uS11 (132 aa).

Belongs to the universal ribosomal protein uS11 family. As to quaternary structure, part of the 30S ribosomal subunit. Interacts with proteins S7 and S18. Binds to IF-3.

Its function is as follows. Located on the platform of the 30S subunit, it bridges several disparate RNA helices of the 16S rRNA. Forms part of the Shine-Dalgarno cleft in the 70S ribosome. In Bifidobacterium animalis subsp. lactis (strain AD011), this protein is Small ribosomal subunit protein uS11.